A 548-amino-acid chain; its full sequence is Glucan endo-1,3-beta-glucosidase (548 aa).

A signal peptide (tat-type signal) is located at residues 1-36 (MPHDRKNSSRRAWAALCAAVLAVSGALVGVAAPASA). The GH64 domain maps to 38–396 (PATIPLTITN…PQAAYIKLDP (359 aa)). Glutamate 153 acts as the Proton donor in catalysis. Aspartate 169 serves as the catalytic Proton acceptor. Residues 422–548 (GTGALRIGST…NQTEAQRWTL (127 aa)) form the Ricin B-type lectin domain.

It belongs to the glycosyl hydrolase 64 family. Predicted to be exported by the Tat system. The position of the signal peptide cleavage has not been experimentally proven.

Its subcellular location is the periplasm. The enzyme catalyses Hydrolysis of (1-&gt;3)-beta-D-glucosidic linkages in (1-&gt;3)-beta-D-glucans.. In terms of biological role, lysis of cellular walls containing beta-1,3-glucans. Implicated in the defense against fungal pathogens. The chain is Glucan endo-1,3-beta-glucosidase (glcI) from Arthrobacter sp. (strain YCWD3).